The sequence spans 207 residues: Probable nicotinate-nucleotide adenylyltransferase (207 aa).

This sequence belongs to the NadD family.

It catalyses the reaction nicotinate beta-D-ribonucleotide + ATP + H(+) = deamido-NAD(+) + diphosphate. It functions in the pathway cofactor biosynthesis; NAD(+) biosynthesis; deamido-NAD(+) from nicotinate D-ribonucleotide: step 1/1. In terms of biological role, catalyzes the reversible adenylation of nicotinate mononucleotide (NaMN) to nicotinic acid adenine dinucleotide (NaAD). This is Probable nicotinate-nucleotide adenylyltransferase from Desulfitobacterium hafniense (strain Y51).